The primary structure comprises 187 residues: V-type ATP synthase subunit E (187 aa).

This sequence belongs to the V-ATPase E subunit family.

Functionally, produces ATP from ADP in the presence of a proton gradient across the membrane. This is V-type ATP synthase subunit E from Clostridioides difficile (strain 630) (Peptoclostridium difficile).